The following is a 1070-amino-acid chain: DNA-directed RNA polymerase subunit beta (1070 aa).

Belongs to the RNA polymerase beta chain family. In terms of assembly, in plastids the minimal PEP RNA polymerase catalytic core is composed of four subunits: alpha, beta, beta', and beta''. When a (nuclear-encoded) sigma factor is associated with the core the holoenzyme is formed, which can initiate transcription.

It is found in the plastid. The protein localises to the chloroplast. It catalyses the reaction RNA(n) + a ribonucleoside 5'-triphosphate = RNA(n+1) + diphosphate. DNA-dependent RNA polymerase catalyzes the transcription of DNA into RNA using the four ribonucleoside triphosphates as substrates. The chain is DNA-directed RNA polymerase subunit beta from Nicotiana tomentosiformis (Tobacco).